Here is a 349-residue protein sequence, read N- to C-terminus: NAC domain-containing protein JA2 (349 aa).

Residues 14 to 163 form the NAC domain; that stretch reads LPPGFRFYPT…EWVLCRIYKK (150 aa). The DNA-binding element occupies 111-169; that stretch reads VGIKKALVFYVGKAPKGSKTNWIMHEYRLFESSRKNNGSSKLDEWVLCRIYKKNSSGPK. The segment at 169 to 194 is disordered; it reads KPLMSGLHSSNEYSHGSSTSSSSQFD. The span at 177–191 shows a compositional bias: low complexity; sequence SSNEYSHGSSTSSSS.

In terms of tissue distribution, expressed in guard cells of the epidermis.

It is found in the nucleus. Its function is as follows. Transcription factor involved in abscisic acid-mediated stomatal closure. Regulates the expression of NCED1, a gene involved in the biosynthesis of abscisic acid (ABA). Required for the stomatal closure induced by the bacterial pathogen Pseudomonas syringae pv tomato DC3000, but not for stomatal reopening. The protein is NAC domain-containing protein JA2 of Solanum lycopersicum (Tomato).